A 316-amino-acid polypeptide reads, in one-letter code: tRNA dimethylallyltransferase (316 aa).

17–24 (GPTASGKT) is an ATP binding site. Substrate is bound at residue 19-24 (TASGKT). 4 interaction with substrate tRNA regions span residues 42 to 45 (DSAL), 166 to 170 (QRLSR), 247 to 252 (RCVGYR), and 280 to 287 (KRQITWLR).

The protein belongs to the IPP transferase family. In terms of assembly, monomer. Requires Mg(2+) as cofactor.

It catalyses the reaction adenosine(37) in tRNA + dimethylallyl diphosphate = N(6)-dimethylallyladenosine(37) in tRNA + diphosphate. Its function is as follows. Catalyzes the transfer of a dimethylallyl group onto the adenine at position 37 in tRNAs that read codons beginning with uridine, leading to the formation of N6-(dimethylallyl)adenosine (i(6)A). The chain is tRNA dimethylallyltransferase from Escherichia coli O157:H7.